Reading from the N-terminus, the 214-residue chain is A-type ATP synthase subunit D (214 aa).

Belongs to the V-ATPase D subunit family. In terms of assembly, has multiple subunits with at least A(3), B(3), C, D, E, F, H, I and proteolipid K(x).

It is found in the cell membrane. Component of the A-type ATP synthase that produces ATP from ADP in the presence of a proton gradient across the membrane. The sequence is that of A-type ATP synthase subunit D from Methanosphaera stadtmanae (strain ATCC 43021 / DSM 3091 / JCM 11832 / MCB-3).